A 246-amino-acid polypeptide reads, in one-letter code: Pyrroloquinoline-quinone synthase (246 aa).

This sequence belongs to the PqqC family.

The enzyme catalyses 6-(2-amino-2-carboxyethyl)-7,8-dioxo-1,2,3,4,7,8-hexahydroquinoline-2,4-dicarboxylate + 3 O2 = pyrroloquinoline quinone + 2 H2O2 + 2 H2O + H(+). Its pathway is cofactor biosynthesis; pyrroloquinoline quinone biosynthesis. Its function is as follows. Ring cyclization and eight-electron oxidation of 3a-(2-amino-2-carboxyethyl)-4,5-dioxo-4,5,6,7,8,9-hexahydroquinoline-7,9-dicarboxylic-acid to PQQ. The chain is Pyrroloquinoline-quinone synthase from Acidiphilium cryptum (strain JF-5).